The chain runs to 1036 residues: UDP-N-acetylglucosamine--peptide N-acetylglucosaminyltransferase 110 kDa subunit (1036 aa).

A2 carries the N-acetylalanine modification. Phosphoserine; by GSK3-beta; alternate occurs at positions 3 and 4. S3 and S4 each carry an O-linked (GlcNAc) serine; alternate glycan. TPR repeat units lie at residues 11–44, 79–112, 113–146, 147–180, 181–214, 215–248, 249–282, 283–316, 317–350, 351–384, 385–418, and 419–452; these read STGL…EPDN, AEAY…KPDF, IDGY…NPDL, YCVR…QPNF, AVAW…DPNF, LDAY…SPNH, AVVH…QPHF, PDAY…CPTH, ADSL…FPEF, AAAH…SPTF, ADAY…NPAF, and ADAH…KPDF. S389 carries an O-linked (GlcNAc) serine; by autocatalysis glycan. T444 carries the phosphothreonine modification. One copy of the TPR 13; truncated repeat lies at 453–463; sequence PDAYCNLAHCL. The DFP motif signature appears at 454 to 456; that stretch reads DAY. Residues 478–493 carry the Nuclear localization signal motif; the sequence is KLVSIVAEQLEKNRLP. The active-site Proton acceptor is H498. UDP contacts are provided by residues Q839, K842, 896–898, 901–904, 920–922, and D925; these read APK, HVRR, and HTT. Phosphotyrosine is present on Y979. Residues 981 to 1000 are required for phosphatidylinositol 3,4,5-triphosphate binding; that stretch reads KKIRGKVWKQRISSPLFNTK.

It belongs to the glycosyltransferase 41 family. O-GlcNAc transferase subfamily. As to quaternary structure, monomer; may exist in different oligomerization states in cells. Homotrimer, oligomerizes via TPR repeats 6 and 7. Trimerization is not necessary for activity in vitro, however it increases affinity for UDP-GlcNAc. A heterotrimer consisting of two 110 kDa subunits and one highly related 78 kDa subunit is isolated from liver. Component of a THAP1/THAP3-HCFC1-OGT complex. Component of the NSL complex at least composed of MOF/KAT8, KANSL1, KANSL2, KANSL3, MCRS1, PHF20, OGT1/OGT, WDR5 and HCFC1. Found in a complex with KIF5B, RHOT1, RHOT2 and TRAK1. Found in a complex composed of at least SINHCAF, SIN3A, HDAC1, SAP30, RBBP4, OGT and TET1. Component of a complex composed of KMT2E/MLL5, OGT and USP7; the complex stabilizes KMT2E/MLL5, preventing KMT2E/MLL5 ubiquitination and proteasomal-mediated degradation. Interacts (via TPRs 1-6) with SIN3A; the interaction mediates transcriptional repression in parallel with histone deacetylase. Interacts (via TPR 5-6) with TET1, TET2 and TET3. Interacts (via TPR repeats 6 and 7) with ATXN10. Interacts with NSD2. Interacts with PROSER1; this interaction mediates TET2 O-GlcNAcylation and stability by promoting the interaction between OGT and TET2. In terms of processing, several different immunologically-related forms of this protein are found in different tissues (with apparent molecular weights of 110, 80 and 78 kDa); they are probably the result of alternative splicing and/or proteolysis. Post-translationally, O-glycosylated; contains O-GlcNAc. Both p110 and p78 forms are O-glycosylated. Ubiquitinated by the SCF(FBXO31) complex, leading to its proteasomal degradation. In terms of processing, phosphorylation on Ser-3 or Ser-4 by GSK3-beta positively regulates its activity. Phosphorylation at Thr-444 by AMPK promotes nuclear localization. Post-translationally, glycosylated via autocatalysis; O-GlcNAcylation at Ser-389 promotes nuclear localization. In terms of tissue distribution, expressed in brain, heart, liver, thymus, muscle, lung, spleen, uterus and ovary; in the kidney only an immunologically-related 78 kDa band is present, which is also present in liver and muscle. In the pancreas, expressed in both exocrine acinar cells and in endocrine cells of the islets of Langerhans.

The protein resides in the cytoplasm. Its subcellular location is the nucleus. It is found in the cell membrane. It localises to the mitochondrion membrane. The protein localises to the cell projection. It carries out the reaction L-seryl-[protein] + UDP-N-acetyl-alpha-D-glucosamine = 3-O-(N-acetyl-beta-D-glucosaminyl)-L-seryl-[protein] + UDP + H(+). The enzyme catalyses L-threonyl-[protein] + UDP-N-acetyl-alpha-D-glucosamine = 3-O-(N-acetyl-beta-D-glucosaminyl)-L-threonyl-[protein] + UDP + H(+). The protein operates within protein modification; protein glycosylation. Inhibited by UDP, UTP and UDP-GlcNAc; 50 mM NaCl or KCl inhibit activity about 70%. Its function is as follows. Catalyzes the transfer of a single N-acetylglucosamine from UDP-GlcNAc to a serine or threonine residue in cytoplasmic and nuclear proteins resulting in their modification with a beta-linked N-acetylglucosamine (O-GlcNAc). Glycosylates a large and diverse number of proteins including histone H2B, AKT1, AMPK, ATG4B, CAPRIN1, EZH2, FNIP1, GSDMD, KRT7, LMNA, LMNB1, LMNB2, RPTOR, HOXA1, PFKL, KMT2E/MLL5, MAPT/TAU, TET2, RBL2, RET, NOD2 and HCFC1. Can regulate their cellular processes via cross-talk between glycosylation and phosphorylation or by affecting proteolytic processing. Involved in insulin resistance in muscle and adipocyte cells via glycosylating insulin signaling components and inhibiting the 'Thr-308' phosphorylation of AKT1, enhancing IRS1 phosphorylation and attenuating insulin signaling. Involved in glycolysis regulation by mediating glycosylation of 6-phosphofructokinase PFKL, inhibiting its activity. Plays a key role in chromatin structure by mediating O-GlcNAcylation of 'Ser-112' of histone H2B: recruited to CpG-rich transcription start sites of active genes via its interaction with TET proteins (TET1, TET2 or TET3). As part of the NSL complex indirectly involved in acetylation of nucleosomal histone H4 on several lysine residues. O-GlcNAcylation of 'Ser-75' of EZH2 increases its stability, and facilitating the formation of H3K27me3 by the PRC2/EED-EZH2 complex. Stabilizes KMT2E/MLL5 by mediating its glycosylation, thereby preventing KMT2E/MLL5 ubiquitination. Regulates circadian oscillation of the clock genes and glucose homeostasis in the liver. Stabilizes clock proteins BMAL1 and CLOCK through O-glycosylation, which prevents their ubiquitination and subsequent degradation. Promotes the CLOCK-BMAL1-mediated transcription of genes in the negative loop of the circadian clock such as PER1/2 and CRY1/2. O-glycosylates HCFC1 and regulates its proteolytic processing and transcriptional activity. Component of a THAP1/THAP3-HCFC1-OGT complex that is required for the regulation of the transcriptional activity of RRM1. Regulates mitochondrial motility in neurons by mediating glycosylation of TRAK1. Promotes autophagy by mediating O-glycosylation of ATG4B. Acts as a regulator of mTORC1 signaling by mediating O-glycosylation of RPTOR and FNIP1: O-GlcNAcylation of RPTOR in response to glucose sufficiency promotes activation of the mTORC1 complex. This Rattus norvegicus (Rat) protein is UDP-N-acetylglucosamine--peptide N-acetylglucosaminyltransferase 110 kDa subunit (Ogt).